The primary structure comprises 339 residues: Ribosomal RNA small subunit methyltransferase H (339 aa).

Residues 44–46 (GGY), Asp61, Phe88, Asp105, and Gln112 contribute to the S-adenosyl-L-methionine site. Residues 263–312 (PQAQSRHLPEKAAAQPVFEKPMKPVSPGEAETAENPRARSAHLRAARRTA) are disordered. Positions 301 to 312 (RSAHLRAARRTA) are enriched in basic residues.

It belongs to the methyltransferase superfamily. RsmH family.

The protein localises to the cytoplasm. The enzyme catalyses cytidine(1402) in 16S rRNA + S-adenosyl-L-methionine = N(4)-methylcytidine(1402) in 16S rRNA + S-adenosyl-L-homocysteine + H(+). Its function is as follows. Specifically methylates the N4 position of cytidine in position 1402 (C1402) of 16S rRNA. The sequence is that of Ribosomal RNA small subunit methyltransferase H from Chelativorans sp. (strain BNC1).